Consider the following 306-residue polypeptide: Armadillo repeat-containing protein 10 (306 aa).

The helical transmembrane segment at 7 to 29 (VGWVAAGLVLGAGACYCIYRLTR) threads the bilayer. Ser-43 bears the Phosphoserine mark. Thr-48 bears the Phosphothreonine mark. Residues 101–143 (GGIPIVGSKINSLNQSIKEKALNALNNLSVNVENQTKIKIYVR) form an ARM repeat.

Interacts with the DNA-binding domain of p53/TP53.

The protein resides in the endoplasmic reticulum membrane. It is found in the mitochondrion outer membrane. May play a role in cell survival and cell growth. May suppress the transcriptional activity of p53/TP53. The protein is Armadillo repeat-containing protein 10 (Armc10) of Rattus norvegicus (Rat).